Here is a 167-residue protein sequence, read N- to C-terminus: uncharacterized protein (167 aa).

Residues 39–59 (LSLFSLSPLFLLLSISSLIFS) form a helical membrane-spanning segment. Positions 92-122 (LGTQIEMITQAMTTLESRVTDLQQESNDHRT) form a coiled coil. Residues 134 to 167 (RDLGDENRPKPTTNKMIATGEQHKGEVSTSLFHD) form a disordered region. The segment covering 154–167 (EQHKGEVSTSLFHD) has biased composition (basic and acidic residues).

The protein resides in the mitochondrion membrane. This is an uncharacterized protein from Arabidopsis thaliana (Mouse-ear cress).